A 151-amino-acid polypeptide reads, in one-letter code: Transcriptional repressor NrdR (151 aa).

A zinc finger lies at 3-34 (CPYCAYGESKVVDSRSTEDGSSIRRRRECLKC). The ATP-cone domain occupies 49 to 139 (ILVIKKNMSR…VYRQFKDINT (91 aa)).

Belongs to the NrdR family. Zn(2+) is required as a cofactor.

Its function is as follows. Negatively regulates transcription of bacterial ribonucleotide reductase nrd genes and operons by binding to NrdR-boxes. This Clostridium botulinum (strain 657 / Type Ba4) protein is Transcriptional repressor NrdR.